Reading from the N-terminus, the 373-residue chain is Chaperone protein DnaJ (373 aa).

Positions 5–70 (DFYATLGVAR…EKRAMYDQYG (66 aa)) constitute a J domain. The segment at 134-212 (GVKKRINIPT…CRGVGRNKAV (79 aa)) adopts a CR-type zinc-finger fold. Cysteine 147, cysteine 150, cysteine 164, cysteine 167, cysteine 186, cysteine 189, cysteine 200, and cysteine 203 together coordinate Zn(2+). CXXCXGXG motif repeat units lie at residues 147–154 (CDVCNGSG), 164–171 (CPTCKGSG), 186–193 (CPTCRGAG), and 200–207 (CVKCRGVG).

This sequence belongs to the DnaJ family. Homodimer. The cofactor is Zn(2+).

Its subcellular location is the cytoplasm. Functionally, participates actively in the response to hyperosmotic and heat shock by preventing the aggregation of stress-denatured proteins and by disaggregating proteins, also in an autonomous, DnaK-independent fashion. Unfolded proteins bind initially to DnaJ; upon interaction with the DnaJ-bound protein, DnaK hydrolyzes its bound ATP, resulting in the formation of a stable complex. GrpE releases ADP from DnaK; ATP binding to DnaK triggers the release of the substrate protein, thus completing the reaction cycle. Several rounds of ATP-dependent interactions between DnaJ, DnaK and GrpE are required for fully efficient folding. Also involved, together with DnaK and GrpE, in the DNA replication of plasmids through activation of initiation proteins. The protein is Chaperone protein DnaJ of Neisseria gonorrhoeae (strain ATCC 700825 / FA 1090).